We begin with the raw amino-acid sequence, 118 residues long: Fluoride-specific ion channel FluC 2 (118 aa).

4 helical membrane passes run 1 to 21 (MIEALLVATGGFFGAITRFAI), 33 to 53 (FPIATFLINITGAFLLGYIIG), 55 to 75 (GVTTGWQLLLGTGFMGAFTTF), and 93 to 113 (TFLLYLSATYIVGILFAFLGM). Na(+)-binding residues include G70 and T73.

The protein belongs to the fluoride channel Fluc/FEX (TC 1.A.43) family.

Its subcellular location is the cell membrane. The enzyme catalyses fluoride(in) = fluoride(out). Its activity is regulated as follows. Na(+) is not transported, but it plays an essential structural role and its presence is essential for fluoride channel function. In terms of biological role, fluoride-specific ion channel. Important for reducing fluoride concentration in the cell, thus reducing its toxicity. This chain is Fluoride-specific ion channel FluC 2, found in Bacillus cereus (strain ZK / E33L).